Consider the following 695-residue polypeptide: MIITFPGSPYKLNQAFQPAGDQPEAIRILVEGIESGLSFQTLLGVTGSGKTFTIANMIARLGRPAIIMAPNKTLAAQLYAEMREFFPENAVEYFVSYYDYYQPEAYVPSRDLFIEKDSSINEHIEQMRLSATKSLLEREDAIIVATVSCIYGIGDPVDYHGMILHVREHEKISQRDIIQRLTGMQYQRNEFEFARGTFRVRGDVLDVFPAENSETALRISLFDDEVESMTLFDPLTGQTRQKVSRYTVYPSSHYVTPRSTTLRAIETIKTELTGRLNYFHENHKLVEAQRLEQRTRFDLEMLNELGFCKGIENYSRHLSGRQPGDPPPTLIDYLPDNALMIIDESHVTVPQIGGMYKGDRSRKENLVAYGFRLPSALDNRPLRFEEFEKLMPQTIFVSATPADYEIQRSGQIAEQVVRPTGLVDPVIIIRPVTTQVDDLMSEVSLRAAQNERVLVTTLTKRMAEDLTDYFSDHGIRVRYLHSDIDTVERVEIIRDLRLGKFDVLVGINLLREGLDIPEVSLVGILDADKEGFLRSERSLIQTMGRAARHVNGTVILYADKITNSMRRAIDETERRRNKQKLFNQQNNITPRGVNKRIKDLIDGVYDSENAAEHRKVAQIQARYAAMDEAQLAKEIQRLEKSMLEAARNMEFEQAAQYRDEIKNLRSKLFIGIIDPDEIREVPQTAGKKSRRKAGR.

Positions 31–414 (EGIESGLSFQ…EIQRSGQIAE (384 aa)) constitute a Helicase ATP-binding domain. 44–51 (GVTGSGKT) provides a ligand contact to ATP. Positions 97 to 120 (YYDYYQPEAYVPSRDLFIEKDSSI) match the Beta-hairpin motif. The Helicase C-terminal domain maps to 435–601 (QVDDLMSEVS…GVNKRIKDLI (167 aa)). In terms of domain architecture, UVR spans 632–667 (AKEIQRLEKSMLEAARNMEFEQAAQYRDEIKNLRSK).

This sequence belongs to the UvrB family. As to quaternary structure, forms a heterotetramer with UvrA during the search for lesions. Interacts with UvrC in an incision complex.

The protein localises to the cytoplasm. In terms of biological role, the UvrABC repair system catalyzes the recognition and processing of DNA lesions. A damage recognition complex composed of 2 UvrA and 2 UvrB subunits scans DNA for abnormalities. Upon binding of the UvrA(2)B(2) complex to a putative damaged site, the DNA wraps around one UvrB monomer. DNA wrap is dependent on ATP binding by UvrB and probably causes local melting of the DNA helix, facilitating insertion of UvrB beta-hairpin between the DNA strands. Then UvrB probes one DNA strand for the presence of a lesion. If a lesion is found the UvrA subunits dissociate and the UvrB-DNA preincision complex is formed. This complex is subsequently bound by UvrC and the second UvrB is released. If no lesion is found, the DNA wraps around the other UvrB subunit that will check the other stand for damage. This is UvrABC system protein B from Nitrosomonas europaea (strain ATCC 19718 / CIP 103999 / KCTC 2705 / NBRC 14298).